We begin with the raw amino-acid sequence, 209 residues long: Ribosomal RNA large subunit methyltransferase E (209 aa).

Positions 63, 65, 83, 99, and 124 each coordinate S-adenosyl-L-methionine. Catalysis depends on K164, which acts as the Proton acceptor.

It belongs to the class I-like SAM-binding methyltransferase superfamily. RNA methyltransferase RlmE family.

Its subcellular location is the cytoplasm. It catalyses the reaction uridine(2552) in 23S rRNA + S-adenosyl-L-methionine = 2'-O-methyluridine(2552) in 23S rRNA + S-adenosyl-L-homocysteine + H(+). Functionally, specifically methylates the uridine in position 2552 of 23S rRNA at the 2'-O position of the ribose in the fully assembled 50S ribosomal subunit. This Cronobacter sakazakii (strain ATCC BAA-894) (Enterobacter sakazakii) protein is Ribosomal RNA large subunit methyltransferase E.